The chain runs to 390 residues: Magnesium-protoporphyrin IX monomethyl ester [oxidative] cyclase (390 aa).

Belongs to the AcsF family. Fe cation is required as a cofactor.

The catalysed reaction is Mg-protoporphyrin IX 13-monomethyl ester + 3 NADPH + 3 O2 + 2 H(+) = 3,8-divinyl protochlorophyllide a + 3 NADP(+) + 5 H2O. The protein operates within porphyrin-containing compound metabolism; chlorophyll biosynthesis (light-independent). Its function is as follows. Catalyzes the formation of the isocyclic ring in chlorophyll biosynthesis. Mediates the cyclase reaction, which results in the formation of divinylprotochlorophyllide (Pchlide) characteristic of all chlorophylls from magnesium-protoporphyrin IX 13-monomethyl ester (MgPMME). This chain is Magnesium-protoporphyrin IX monomethyl ester [oxidative] cyclase, found in Prochlorococcus marinus (strain MIT 9312).